Here is a 383-residue protein sequence, read N- to C-terminus: Cytochrome b (383 aa).

A run of 4 helical transmembrane segments spans residues 32–52 (VGSL…FLAM), 76–98 (WLMR…LHMG), 113–133 (VWSM…MGYC), and 179–199 (FFAL…MHFM). Histidine 82 and histidine 96 together coordinate heme b. Heme b is bound by residues histidine 183 and histidine 197. Histidine 202 lines the a ubiquinone pocket. A run of 4 helical transmembrane segments spans residues 225-245 (FVFK…LFVF), 289-309 (LGGV…PMTD), 321-341 (LSKL…NMGQ), and 348-368 (FIEL…MLVP).

The protein belongs to the cytochrome b family. In terms of assembly, fungal cytochrome b-c1 complex contains 10 subunits; 3 respiratory subunits, 2 core proteins and 5 low-molecular weight proteins. Cytochrome b-c1 complex is a homodimer. Heme b is required as a cofactor.

It is found in the mitochondrion inner membrane. In terms of biological role, component of the ubiquinol-cytochrome c reductase complex (complex III or cytochrome b-c1 complex) that is part of the mitochondrial respiratory chain. The b-c1 complex mediates electron transfer from ubiquinol to cytochrome c. Contributes to the generation of a proton gradient across the mitochondrial membrane that is then used for ATP synthesis. The polypeptide is Cytochrome b (COB) (Debaryomyces hansenii (strain ATCC 36239 / CBS 767 / BCRC 21394 / JCM 1990 / NBRC 0083 / IGC 2968) (Yeast)).